The chain runs to 502 residues: Mitochondrial fusion and transport protein UGO1 (502 aa).

Methionine 1 is subject to N-acetylmethionine. Over 1–293 the chain is Cytoplasmic; it reads MNNNNVTEAT…VINSPDISKS (293 aa). A binds FZO1 region spans residues 1–294; the sequence is MNNNNVTEAT…INSPDISKSF (294 aa). The Solcar repeat unit spans residues 288-383; it reads PDISKSFILA…NSFFNKLFDL (96 aa). Residues 294–314 form a helical; Signal-anchor for type II membrane protein membrane-spanning segment; sequence FILALGAGVFTSIILLPVDLI. Residues 312-502 form a binds MGM1 region; sequence DLIRTRLIVT…VDINMEQEKF (191 aa). The Mitochondrial intermembrane portion of the chain corresponds to 315 to 502; that stretch reads RTRLIVTSFK…VDINMEQEKF (188 aa).

Interacts with FZO1 through its cytoplasmic domain and with MGM1 through its mitochondrial intermembrane space domain.

Its subcellular location is the mitochondrion outer membrane. Required for mitochondrial fusion as well as normal mitochondrial morphology by bridging the essential interaction between FZO1 and MGM1. May coordinate fusion of inner and outer membranes during mitochondrial fusion. The polypeptide is Mitochondrial fusion and transport protein UGO1 (Saccharomyces cerevisiae (strain ATCC 204508 / S288c) (Baker's yeast)).